A 182-amino-acid chain; its full sequence is MSVVETVLVALALGCDAFAVGMGVGTRFCNPRQIFRLSFHFGLFQMMMPIAGWFVGSRAADLVSTWGPWISFALLLFIGGKMAYESFRSLEAEDGECPDPTKGSSLVMLSVATSMDALGVGFSFGILGQQLFLSAVWIGITAGIMTWGAMRLGNRLSRQFGRRMETVGGLILVAIAVKLLLF.

6 helical membrane-spanning segments follow: residues 6-26, 37-57, 59-79, 104-126, 131-149, and 164-181; these read TVLVALALGCDAFAVGMGVGT, LSFHFGLFQMMMPIAGWFVGS, AADLVSTWGPWISFALLLFIG, SSLVMLSVATSMDALGVGFSFGI, LFLSAVWIGITAGIMTWGA, and METVGGLILVAIAVKLLL.

The protein belongs to the MntP (TC 9.B.29) family.

It localises to the cell inner membrane. Probably functions as a manganese efflux pump. The protein is Putative manganese efflux pump MntP of Syntrophobacter fumaroxidans (strain DSM 10017 / MPOB).